We begin with the raw amino-acid sequence, 129 residues long: Flagellar assembly factor FliW (129 aa).

Belongs to the FliW family. In terms of assembly, interacts with translational regulator CsrA and flagellin(s).

It is found in the cytoplasm. Functionally, acts as an anti-CsrA protein, binds CsrA and prevents it from repressing translation of its target genes, one of which is flagellin. Binds to flagellin and participates in the assembly of the flagellum. In Campylobacter jejuni subsp. doylei (strain ATCC BAA-1458 / RM4099 / 269.97), this protein is Flagellar assembly factor FliW.